A 471-amino-acid polypeptide reads, in one-letter code: DnaJ protein P58IPK homolog B (471 aa).

Residues 1-24 (MARWPWRWRVLLPLLLLHSSPVFA) form the signal peptide. TPR repeat units follow at residues 32–65 (PSTL…DPNH), 66–99 (SEAY…KPGS), 112–146 (AQNA…SPNC), 148–180 (KAKL…DEDN), 181–214 (LDAL…DPEH), 227–260 (LLKK…DPDH), 265–298 (VHLY…DGEL), and 300–332 (DALT…SPQD). Asn64 is a glycosylation site (N-linked (GlcNAc...) asparagine). The region spanning 353–419 (DWYKILGISK…DKRVRYDRGE (67 aa)) is the J domain.

Interacts with BIP1.

Its subcellular location is the endoplasmic reticulum lumen. Functionally, may play a role in protein folding in the endoplasmic reticulum. In Oryza sativa subsp. japonica (Rice), this protein is DnaJ protein P58IPK homolog B.